A 24-amino-acid polypeptide reads, in one-letter code: Brevinin-1SPa (24 aa).

A disulfide bond links Cys18 and Cys24.

As to expression, expressed by the skin glands.

The protein localises to the secreted. In terms of biological role, antimicrobial peptide with activity against Gram-negative and Gram-positive bacteria (MIC=13 uM against E.coli, MIC=3 uM against S.aureus) and fungi (MIC=6 uM against C.albicans). Shows hemolytic activity on human erythrocytes (HC(50)=7 uM). This Lithobates septentrionalis (Mink frog) protein is Brevinin-1SPa.